The sequence spans 341 residues: Putative UPF0607 protein ENSP00000383144 (341 aa).

2 disordered regions span residues 70 to 131 (RLPK…NPRP) and 218 to 279 (LMVG…PPAK). The span at 72–101 (PKTEVRAEEPKEATEVKDQVETQEQEDNKR) shows a compositional bias: basic and acidic residues. Positions 108–127 (EAASTSRPLETQGNLTSSWY) are enriched in polar residues. The segment covering 243–252 (AGHRSHKRKL) has biased composition (basic residues).

Belongs to the UPF0607 family.

In Homo sapiens (Human), this protein is Putative UPF0607 protein ENSP00000383144.